Consider the following 552-residue polypeptide: Urocanate hydratase (552 aa).

NAD(+)-binding positions include Gly50–Gly51, Gln128, Gly174–Gly176, Glu194, Arg199, Gln261–His265, Tyr271–Ile272, and Tyr320. Cys408 is an active-site residue. Residue Gly490 participates in NAD(+) binding.

This sequence belongs to the urocanase family. NAD(+) is required as a cofactor.

It localises to the cytoplasm. The catalysed reaction is 4-imidazolone-5-propanoate = trans-urocanate + H2O. It participates in amino-acid degradation; L-histidine degradation into L-glutamate; N-formimidoyl-L-glutamate from L-histidine: step 2/3. Catalyzes the conversion of urocanate to 4-imidazolone-5-propionate. This is Urocanate hydratase from Bdellovibrio bacteriovorus (strain ATCC 15356 / DSM 50701 / NCIMB 9529 / HD100).